Here is a 347-residue protein sequence, read N- to C-terminus: S-adenosylmethionine:tRNA ribosyltransferase-isomerase (347 aa).

This sequence belongs to the QueA family. In terms of assembly, monomer.

It localises to the cytoplasm. It catalyses the reaction 7-aminomethyl-7-carbaguanosine(34) in tRNA + S-adenosyl-L-methionine = epoxyqueuosine(34) in tRNA + adenine + L-methionine + 2 H(+). It participates in tRNA modification; tRNA-queuosine biosynthesis. Transfers and isomerizes the ribose moiety from AdoMet to the 7-aminomethyl group of 7-deazaguanine (preQ1-tRNA) to give epoxyqueuosine (oQ-tRNA). This is S-adenosylmethionine:tRNA ribosyltransferase-isomerase from Methylococcus capsulatus (strain ATCC 33009 / NCIMB 11132 / Bath).